Here is a 233-residue protein sequence, read N- to C-terminus: Nucleoside diphosphate kinase 2, chloroplastic (233 aa).

Residues 1-67 (MEAMSGLSSP…LISHSLPRKK (67 aa)) constitute a chloroplast transit peptide. Lysine 93, phenylalanine 141, arginine 169, threonine 175, arginine 186, and asparagine 196 together coordinate ATP. The active-site Pros-phosphohistidine intermediate is histidine 199.

It belongs to the NDK family. Requires Mg(2+) as cofactor.

It is found in the plastid. The protein localises to the chloroplast. The enzyme catalyses a 2'-deoxyribonucleoside 5'-diphosphate + ATP = a 2'-deoxyribonucleoside 5'-triphosphate + ADP. It carries out the reaction a ribonucleoside 5'-diphosphate + ATP = a ribonucleoside 5'-triphosphate + ADP. Functionally, major role in the synthesis of nucleoside triphosphates other than ATP. The ATP gamma phosphate is transferred to the NDP beta phosphate via a ping-pong mechanism, using a phosphorylated active-site intermediate. The protein is Nucleoside diphosphate kinase 2, chloroplastic (NDPK2) of Spinacia oleracea (Spinach).